Consider the following 208-residue polypeptide: Uracil phosphoribosyltransferase (208 aa).

Residues R78, R103, and 130–138 contribute to the 5-phospho-alpha-D-ribose 1-diphosphate site; that span reads DPMLATGGS. Uracil contacts are provided by residues I193 and 198–200; that span reads GDA. D199 serves as a coordination point for 5-phospho-alpha-D-ribose 1-diphosphate.

It belongs to the UPRTase family. It depends on Mg(2+) as a cofactor.

The catalysed reaction is UMP + diphosphate = 5-phospho-alpha-D-ribose 1-diphosphate + uracil. It functions in the pathway pyrimidine metabolism; UMP biosynthesis via salvage pathway; UMP from uracil: step 1/1. With respect to regulation, allosterically activated by GTP. Functionally, catalyzes the conversion of uracil and 5-phospho-alpha-D-ribose 1-diphosphate (PRPP) to UMP and diphosphate. The sequence is that of Uracil phosphoribosyltransferase from Wolinella succinogenes (strain ATCC 29543 / DSM 1740 / CCUG 13145 / JCM 31913 / LMG 7466 / NCTC 11488 / FDC 602W) (Vibrio succinogenes).